The following is a 166-amino-acid chain: Protein-export protein SecB (166 aa).

This sequence belongs to the SecB family. In terms of assembly, homotetramer, a dimer of dimers. One homotetramer interacts with 1 SecA dimer.

The protein localises to the cytoplasm. In terms of biological role, one of the proteins required for the normal export of preproteins out of the cell cytoplasm. It is a molecular chaperone that binds to a subset of precursor proteins, maintaining them in a translocation-competent state. It also specifically binds to its receptor SecA. This Actinobacillus succinogenes (strain ATCC 55618 / DSM 22257 / CCUG 43843 / 130Z) protein is Protein-export protein SecB.